The sequence spans 289 residues: Esterase GA18864 (289 aa).

Residues 1 to 19 (MTNNDAAVEAPSSSRASSS) are compositionally biased toward low complexity. A disordered region spans residues 1–24 (MTNNDAAVEAPSSSRASSSKQQPK). Catalysis depends on charge relay system residues serine 133, aspartate 191, and histidine 218. Residues 253–289 (VSFIESGAEDNDDDGDANDAEVAAATAAAGSDLDDSD) form a disordered region. Residues 259-271 (GAEDNDDDGDAND) are compositionally biased toward acidic residues. Residues 272-283 (AEVAAATAAAGS) show a composition bias toward low complexity.

Belongs to the LovG family.

The chain is Esterase GA18864 from Drosophila pseudoobscura pseudoobscura (Fruit fly).